The primary structure comprises 883 residues: DNA mismatch repair protein MutS (883 aa).

602–609 (GPNMSGKS) is a binding site for ATP.

It belongs to the DNA mismatch repair MutS family.

In terms of biological role, this protein is involved in the repair of mismatches in DNA. It is possible that it carries out the mismatch recognition step. This protein has a weak ATPase activity. The chain is DNA mismatch repair protein MutS from Staphylococcus haemolyticus (strain JCSC1435).